The primary structure comprises 337 residues: Nucleoid-associated protein HSM_0096 (337 aa).

Belongs to the YejK family.

It localises to the cytoplasm. The protein resides in the nucleoid. In Histophilus somni (strain 2336) (Haemophilus somnus), this protein is Nucleoid-associated protein HSM_0096.